Consider the following 490-residue polypeptide: UDP-N-acetylmuramoyl-L-alanyl-D-glutamate--2,6-diaminopimelate ligase (490 aa).

Residues L22, S24, and 39 to 41 (HQT) each bind UDP-N-acetyl-alpha-D-muramoyl-L-alanyl-D-glutamate. 111-117 (GTNGKTT) contacts ATP. UDP-N-acetyl-alpha-D-muramoyl-L-alanyl-D-glutamate is bound by residues N152, 153–154 (TT), S180, Q186, and R188. At K220 the chain carries N6-carboxylysine. Residues R385, 409–412 (DNPR), G460, and E464 contribute to the meso-2,6-diaminopimelate site. Residues 409–412 (DNPR) carry the Meso-diaminopimelate recognition motif motif.

The protein belongs to the MurCDEF family. MurE subfamily. Requires Mg(2+) as cofactor. In terms of processing, carboxylation is probably crucial for Mg(2+) binding and, consequently, for the gamma-phosphate positioning of ATP.

It is found in the cytoplasm. It carries out the reaction UDP-N-acetyl-alpha-D-muramoyl-L-alanyl-D-glutamate + meso-2,6-diaminopimelate + ATP = UDP-N-acetyl-alpha-D-muramoyl-L-alanyl-gamma-D-glutamyl-meso-2,6-diaminopimelate + ADP + phosphate + H(+). Its pathway is cell wall biogenesis; peptidoglycan biosynthesis. Functionally, catalyzes the addition of meso-diaminopimelic acid to the nucleotide precursor UDP-N-acetylmuramoyl-L-alanyl-D-glutamate (UMAG) in the biosynthesis of bacterial cell-wall peptidoglycan. This Yersinia pestis protein is UDP-N-acetylmuramoyl-L-alanyl-D-glutamate--2,6-diaminopimelate ligase.